Reading from the N-terminus, the 333-residue chain is B3 domain-containing transcription factor NGA4 (333 aa).

A DNA-binding region (TF-B3) is located at residues 36–145 (FDKVLTPSDV…KIMFIDWRPR (110 aa)). Positions 268–333 (VEESSSSGDT…YKRKGKSLEL (66 aa)) are disordered. Residues 323–333 (EYKRKGKSLEL) are compositionally biased toward basic and acidic residues.

Its subcellular location is the nucleus. Regulates lateral organ growth. Functionally redundant with NGA1, NGA2 and NGA3. This is B3 domain-containing transcription factor NGA4 (NGA4) from Arabidopsis thaliana (Mouse-ear cress).